Here is a 1140-residue protein sequence, read N- to C-terminus: Envelopment polyprotein (1140 aa).

The N-terminal stretch at 1–17 (MVGWVCISLVVLATTTA) is a signal peptide. At 18–489 (GLTRNLYELK…VPGLHGWATT (472 aa)) the chain is on the lumenal side. Disulfide bonds link Cys-30–Cys-155, Cys-64–Cys-161, Cys-113–Cys-132, Cys-137–Cys-142, Cys-179–Cys-189, and Cys-214–Cys-251. N-linked (GlcNAc...) asparagine; by host glycosylation occurs at Asn-138. N-linked (GlcNAc...) asparagine; by host glycosylation is present at Asn-351. Intrachain disulfides connect Cys-380–Cys-439, Cys-384–Cys-393, Cys-409–Cys-428, and Cys-456–Cys-479. Residue Asn-403 is glycosylated (N-linked (GlcNAc...) asparagine; by host). Residues 490 to 510 (ALLITFCFGWLLIPTITMIIL) form a helical membrane-spanning segment. At 511–631 (KILRLLTFSC…LGVFRYKSRC (121 aa)) the chain is on the cytoplasmic side. A binding to the ribonucleoprotein region spans residues 520–537 (CSHYSTESKFKAILERVK). 2 CCHC-type zinc fingers span residues 549 to 569 (CDVC…KKSC) and 574 to 595 (CPYC…FSIC). Binding to the ribonucleoprotein stretches follow at residues 592-609 (FSIC…KKSL), 596-607 (KLTNRFQENLKK), and 615-629 (KQGC…RYKS). The tract at residues 611–638 (RPEVKQGCYRTLGVFRYKSRCYVGLVWG) is interaction with host TRAF3. Residues 615 to 638 (KQGCYRTLGVFRYKSRCYVGLVWG) form the ITAM domain. Phosphotyrosine; by host occurs at positions 619 and 632. The short motif at 619–622 (YRTL) is the YxxL element. Residues 632 to 652 (YVGLVWGVLLTTELIVWAASA) form a helical membrane-spanning segment. Topologically, residues 653–1108 (DTPLMESGWS…EWLLGILNGN (456 aa)) are lumenal. Disulfide bonds link Cys-739–Cys-774, Cys-743–Cys-781, Cys-755–Cys-888, Cys-769–Cys-899, Cys-784–Cys-907, Cys-810–Cys-819, Cys-827–Cys-836, and Cys-867–Cys-871. The interval 761-781 (YQYETSWGCNPPDCPGVGTGC) is fusion loop. The N-linked (GlcNAc...) asparagine; by host glycan is linked to Asn-931. Intrachain disulfides connect Cys-973–Cys-1003, Cys-996–Cys-1048, Cys-1013–Cys-1018, Cys-1049–Cys-1054, and Cys-1088–Cys-1092. Residues 1109-1129 (WVVVAVLIVILILSILLFSFF) traverse the membrane as a helical segment. Positions 1125–1140 (LFSFFCPIRGRKNKSN) are binding to the ribonucleoprotein. Residues 1130–1140 (CPIRGRKNKSN) are Cytoplasmic-facing.

Belongs to the hantavirus envelope glycoprotein family. Homodimer. Homotetramer; forms heterotetrameric Gn-Gc spikes in the pre-fusion conformation. Interacts (via C-terminus) with the nucleoprotein. Interacts with host TUFM; this interaction contributes to the virus-induced degradation of mitochondria by autophagy, which leads to degradation of host MAVS and inhibition of type I interferon (IFN) responses. Interacts with host MAP1LC3B; this interaction contributes to the virus-induced degradation of mitochondria by autophagy, which leads to degradation of host MAVS and inhibition of type I interferon (IFN) responses. Interacts (via C-terminus) with host TRAF3 (via N-terminus); this interaction inhibits the formation of TRAF3-TBK1 complexes. In terms of assembly, homodimer. Homotetramer; forms heterotetrameric Gn-Gc spikes in the pre-fusion conformation. Homotrimer; forms homotrimer in the post-fusion conformation at acidic pH. Interacts (via C-terminus) with the nucleoprotein. In terms of processing, envelope polyprotein precursor is quickly cleaved in vivo just after synthesis, presumably by host signal peptidase.

It localises to the virion membrane. Its subcellular location is the host cell surface. The protein localises to the host Golgi apparatus membrane. It is found in the host endoplasmic reticulum membrane. The protein resides in the host mitochondrion. Forms homotetramers with glycoprotein C at the surface of the virion. Attaches the virion to host cell receptors including integrin ITGAV/ITGB3. This attachment induces virion internalization predominantly through clathrin-dependent endocytosis. Mediates the assembly and budding of infectious virus particles through its interaction with the nucleocapsid protein and the viral genome. May dysregulate normal immune and endothelial cell responses through an ITAM motif. Translocates to mitochondria, binds to host TUFM and recruits MAP1LC3B. These interactions induce mitochondrial autophagy and therefore destruction of host MAVS leading to inhibition of type I interferon (IFN) responses. Concomitant breakdown of glycoprotein N is apparently prevented by the nucleoprotein that may inhibit Gn-stimulated autophagosome-lysosome fusion. Interacts with the viral genomic RNA. Inhibits the host RIG-I/TBK1 pathway by disrupting the formation of TBK1-TRAF3 complexes and downstream signaling responses required for IFN-beta transcription. Its function is as follows. Forms homotetramers with glycoprotein N at the surface of the virion. Attaches the virion to host cell receptors including integrin ITGAV/ITGB3. This attachment induces virion internalization predominantly through clathrin-dependent endocytosis. Class II fusion protein that promotes fusion of viral membrane with host endosomal membrane after endocytosis of the virion. The chain is Envelopment polyprotein (GP) from Homo sapiens (Human).